Consider the following 266-residue polypeptide: Coiled-coil domain-containing glutamate-rich protein 2 (266 aa).

Positions 1 to 23 (MPPRGPASELLLLRLLLLGAATA) are cleaved as a signal peptide. Basic and acidic residues-rich tracts occupy residues 90-100 (EAGKMRSSQEV), 154-188 (LWQR…EKGV), 204-213 (GGGERREDLP), and 221-266 (QPEA…RREG). Residues 90–266 (EAGKMRSSQE…TLGEQLRREG (177 aa)) form a disordered region.

As to expression, expressed at higher levels in fetal brain and skeletal muscle. Lower expression is detected in fetal kidney, liver, spleen, thymus, heart and lung.

The protein resides in the secreted. In Homo sapiens (Human), this protein is Coiled-coil domain-containing glutamate-rich protein 2 (CCER2).